The primary structure comprises 1162 residues: Topoisomerase 1-associated factor 1 (1162 aa).

2 disordered regions span residues 977 to 1017 (TEGR…EANA) and 1127 to 1162 (TQVVSSEEYSSHPLEEEVTSEQRKRKKPRIESDTEY). Basic residues predominate over residues 993–1003 (QRSKGKRKAIA).

This sequence belongs to the timeless family. In terms of assembly, component of the fork protection complex (FPC) consisting of TOF1 and CSM3.

It is found in the nucleus. Forms a fork protection complex (FPC) with CSM3 and which is required for chromosome segregation during meiosis and DNA damage repair. FPC coordinates leading and lagging strand synthesis and moves with the replication fork. FPC stabilizes replication forks in a configuration that is recognized by replication checkpoint sensors. The chain is Topoisomerase 1-associated factor 1 (TOF1) from Kluyveromyces lactis (strain ATCC 8585 / CBS 2359 / DSM 70799 / NBRC 1267 / NRRL Y-1140 / WM37) (Yeast).